The primary structure comprises 418 residues: Triacylglycerol lipase 2 (418 aa).

The signal sequence occupies residues 1 to 31; that stretch reads MAGSVMVPSVSIGLALSVLIFFALSLKTLEA. An N-linked (GlcNAc...) asparagine glycan is attached at N158. The active-site Nucleophile is S190. 2 N-linked (GlcNAc...) asparagine glycosylation sites follow: N286 and N342. Residues D360 and H393 each act as charge relay system in the active site.

The protein belongs to the AB hydrolase superfamily. Lipase family.

The protein localises to the secreted. The enzyme catalyses a triacylglycerol + H2O = a diacylglycerol + a fatty acid + H(+). Triacylglycerol (TAG) lipase. May be involved for TAG storage breakdown during seed germination. The protein is Triacylglycerol lipase 2 (LIP2) of Arabidopsis thaliana (Mouse-ear cress).